Here is a 237-residue protein sequence, read N- to C-terminus: Cyclic nucleotide phosphodiesterase inhibitor (237 aa).

Positions 1-20 (MAKIIISLILLLSLFSFSYG) are cleaved as a signal peptide. N-linked (GlcNAc...) asparagine glycans are attached at residues asparagine 28, asparagine 65, and asparagine 70. 5 Cys-rich CT repeats span residues 57–81 (DLCHNSACNASTGNCTLTTISCNDN), 82–105 (NPCTDDFCHPGYGCYSVPNSCDPG), 116–139 (DPCTYDFCDALNICRHSETYCNDG), 140–162 (DACTLNTCGVNGCNFTKISCDDN), and 163–186 (DPCTADYCSTLYGCYHEPIECSIK). N-linked (GlcNAc...) asparagine glycosylation occurs at asparagine 153. Asparagine 207 is a glycosylation site (N-linked (GlcNAc...) asparagine).

Its function is as follows. PDI acts by binding stoichiometrically to cyclic nucleotide phosphodiesterase, changing the KM of the enzyme for cAMP from 10 uM to 2 mM. The polypeptide is Cyclic nucleotide phosphodiesterase inhibitor (pdiA) (Dictyostelium discoideum (Social amoeba)).